The primary structure comprises 586 residues: DNA-binding protein RFX8 (586 aa).

A DNA-binding region (RFX-type winged-helix) is located at residues 22–97 (VIQWLVDNFC…YHYDGICIKK (76 aa)).

Belongs to the RFX family.

It localises to the nucleus. Functionally, may be a transcription factor. The sequence is that of DNA-binding protein RFX8 (RFX8) from Homo sapiens (Human).